The following is a 320-amino-acid chain: Zinc finger protein 330 (320 aa).

Residues 1–23 (MPKKKTGARKKAENRREREKQLR) form a disordered region. The Nuclear localization signal motif lies at 3–11 (KKKTGARKK). The span at 10 to 22 (KKAENRREREKQL) shows a compositional bias: basic and acidic residues. 4 C4-type zinc fingers span residues 42–58 (CDKCQRRQKNRAFCYFC), 67–104 (CAQCGKTKCMMKSSDCVIKHAGVYSTGLAMVGAICDFC), 129–149 (CVECERGVWDHGGRIFSCSFC), and 175–189 (CVSCNRLGQHSCLRC). The segment at 206–320 (EKGKQPPCPK…GYAHYEEQEN (115 aa)) is disordered. The segment covering 216-225 (CGHETQETKD) has biased composition (basic and acidic residues). Residues 269–285 (DEEEDEYEAEDDEEEED) show a composition bias toward acidic residues. Residue Ser-291 is modified to Phosphoserine.

This sequence belongs to the NOA36 family. In terms of tissue distribution, widely expressed. Higher expression seen in heart and skeletal muscle.

It localises to the nucleus. The protein resides in the nucleolus. Its subcellular location is the chromosome. The protein localises to the centromere. The sequence is that of Zinc finger protein 330 (ZNF330) from Homo sapiens (Human).